The primary structure comprises 497 residues: MRAILLFYMYYAVTKGGLGMSQTTAASIMSIYGSLVYLSTLVGGWLSDRVWGSRKTVFYGGVLIMLGHIVLALPAGVTVLYRSIALIVVGTGLLKPNVSDMVGGLYSVEDPRRDAGFSIFVFGINLGSIIAPWLVPWAAQGFGVHIFGSQLNFHAGFSLAAVGMFFGLVQYVLGGKKYLSTESLTPNDPIDKGDLLNVIKWVVIIIIAIVAILAAMAGVGQLSVDNVITLLTILAIALPIYYFVMMFRSSKVTKIELGIHLLPVSLKNRLFFKKGYKRLKQIIQLELAIKRQSFIILIALIIMASILIPNKVIIAKHLLKLVLLVFYWIGLNLIPFSTFVLSFLFLDYIKHMFKKEGEQAKKTKEKSRIHHGIEIPLFLRQLIINIFTLIILEGETLFDENGVEVNIAEHPVQGYTELNINLLNKDSIDLWADWIQSVAKYLLNIMYTADVIVIIIFYLVKMAALWWAWSYIPLSTVFVGYKYSGKDESLQAALEVL.

12 helical membrane-spanning segments follow: residues 3–23 (AILLFYMYYAVTKGGLGMSQT), 26–46 (ASIMSIYGSLVYLSTLVGGWL), 57–77 (VFYGGVLIMLGHIVLALPAGV), 84–104 (IALIVVGTGLLKPNVSDMVGG), 119–139 (IFVFGINLGSIIAPWLVPWAA), 155–175 (AGFSLAAVGMFFGLVQYVLGG), 199–219 (IKWVVIIIIAIVAILAAMAGV), 227–247 (VITLLTILAIALPIYYFVMMF), 294–314 (FIILIALIIMASILIPNKVII), 321–341 (LVLLVFYWIGLNLIPFSTFVL), 372–392 (GIEIPLFLRQLIINIFTLIIL), and 452–472 (IVIIIFYLVKMAALWWAWSYI).

Belongs to the major facilitator superfamily. Proton-dependent oligopeptide transporter (POT/PTR) (TC 2.A.17) family.

It localises to the cell membrane. In terms of biological role, proton-dependent uptake of di- or tri-peptides. The chain is Di-/tripeptide transporter (dtpT) from Lactobacillus helveticus (Lactobacillus suntoryeus).